A 218-amino-acid chain; its full sequence is Pyridoxine/pyridoxamine 5'-phosphate oxidase (218 aa).

Residues 14-17 and Lys-72 each bind substrate; that span reads RREY. FMN-binding positions include 67–72, 82–83, Arg-88, Lys-89, and Gln-111; these read RIVLLK and YT. Substrate-binding residues include Tyr-129, Arg-133, and Ser-137. Residues 146–147 and Trp-191 each bind FMN; that span reads QS. 197–199 contacts substrate; the sequence is RLH. An FMN-binding site is contributed by Arg-201.

Belongs to the pyridoxamine 5'-phosphate oxidase family. Homodimer. FMN serves as cofactor.

The catalysed reaction is pyridoxamine 5'-phosphate + O2 + H2O = pyridoxal 5'-phosphate + H2O2 + NH4(+). The enzyme catalyses pyridoxine 5'-phosphate + O2 = pyridoxal 5'-phosphate + H2O2. It functions in the pathway cofactor metabolism; pyridoxal 5'-phosphate salvage; pyridoxal 5'-phosphate from pyridoxamine 5'-phosphate: step 1/1. The protein operates within cofactor metabolism; pyridoxal 5'-phosphate salvage; pyridoxal 5'-phosphate from pyridoxine 5'-phosphate: step 1/1. Functionally, catalyzes the oxidation of either pyridoxine 5'-phosphate (PNP) or pyridoxamine 5'-phosphate (PMP) into pyridoxal 5'-phosphate (PLP). The sequence is that of Pyridoxine/pyridoxamine 5'-phosphate oxidase from Enterobacter sp. (strain 638).